We begin with the raw amino-acid sequence, 266 residues long: Putative carbamate hydrolase RutD (266 aa).

The region spanning 14 to 115 (PVVVLISGLG…TMLVSVNGWL (102 aa)) is the AB hydrolase-1 domain.

The protein belongs to the AB hydrolase superfamily. Hydrolase RutD family.

The catalysed reaction is carbamate + 2 H(+) = NH4(+) + CO2. In terms of biological role, involved in pyrimidine catabolism. May facilitate the hydrolysis of carbamate, a reaction that can also occur spontaneously. The polypeptide is Putative carbamate hydrolase RutD (Shigella flexneri serotype 5b (strain 8401)).